A 447-amino-acid polypeptide reads, in one-letter code: MSDYLSVSSLTKYLKLKFDRDPYLERVYLTGQVSNFRRRPNHQYFSLKDEKAVIQATMWSGIYRKLGFELEEGMKINVIGRVQLYEPSGSYSIIIEKAEPDGIGALAVQFEQLKKKLAEAGYFDDRHKQRLSQFVKKIGVVTSPSGAVIRDIITTVSRRFPGVDILLFPTKVQGEGAAQEVADNIRLANERTDLDLLIVGRGGGSIEDLWAFNEEIVVQAIFESHLPIISSVGHETDTTLADFAADRRAATPTAAAELATPVTKADLLAFLKERQMRSYQAVMRLIRQKDEQVKKLQRSVIFRQPERLYDAYVQKLDHLRTHLLTKVRQVYDVYDSKEHLLRQRLLSFNLSGCIQRYQAQLKQDQRLLLSHMSSQYDSKLARFEKAQDALLSLDTTRIVARGYAIVQKDNHIIQSTQQIKKGDRLHLEMKDGQVQVEVENVKQEENI.

This sequence belongs to the XseA family. Heterooligomer composed of large and small subunits.

The protein resides in the cytoplasm. It catalyses the reaction Exonucleolytic cleavage in either 5'- to 3'- or 3'- to 5'-direction to yield nucleoside 5'-phosphates.. Bidirectionally degrades single-stranded DNA into large acid-insoluble oligonucleotides, which are then degraded further into small acid-soluble oligonucleotides. The polypeptide is Exodeoxyribonuclease 7 large subunit (Streptococcus mutans serotype c (strain ATCC 700610 / UA159)).